Consider the following 366-residue polypeptide: Aminomethyltransferase (366 aa).

It belongs to the GcvT family. The glycine cleavage system is composed of four proteins: P, T, L and H.

The enzyme catalyses N(6)-[(R)-S(8)-aminomethyldihydrolipoyl]-L-lysyl-[protein] + (6S)-5,6,7,8-tetrahydrofolate = N(6)-[(R)-dihydrolipoyl]-L-lysyl-[protein] + (6R)-5,10-methylene-5,6,7,8-tetrahydrofolate + NH4(+). Its function is as follows. The glycine cleavage system catalyzes the degradation of glycine. In Bacillus velezensis (strain DSM 23117 / BGSC 10A6 / LMG 26770 / FZB42) (Bacillus amyloliquefaciens subsp. plantarum), this protein is Aminomethyltransferase.